A 227-amino-acid chain; its full sequence is Brain acid soluble protein 1 (227 aa).

A compositionally biased stretch (basic residues) spans 1–11 (MGGKLSKKKKG). The segment at 1 to 227 (MGGKLSKKKK…NSDQTVTVKE (227 aa)) is disordered. The N-myristoyl glycine moiety is linked to residue Gly2. The span at 15-27 (NDEKAKEKDKKAE) shows a compositional bias: basic and acidic residues. Lys25 is covalently cross-linked (Glycyl lysine isopeptide (Lys-Gly) (interchain with G-Cter in SUMO2)). Phosphothreonine occurs at positions 31 and 36. Ser40 is modified (phosphoserine). A compositionally biased stretch (basic and acidic residues) spans 49–105 (AEAKEGKEKPDQDAEGKAEEKEGEKDAAAAKEEAPKAEPEKTEGAAEAKAEPPKAPE). Glycyl lysine isopeptide (Lys-Gly) (interchain with G-Cter in SUMO2) cross-links involve residues Lys84 and Lys97. Over residues 106–139 (QEQAAPGPAAGGEAPKAAEAAAAPAESAAPAAGE) the composition is skewed to low complexity. The segment covering 140–152 (EPSKEEGEPKKTE) has biased composition (basic and acidic residues). A Glycyl lysine isopeptide (Lys-Gly) (interchain with G-Cter in SUMO2) cross-link involves residue Lys163. Ser164, Ser170, Ser172, Ser176, and Ser195 each carry phosphoserine. The span at 173-185 (KPGSSEAAPSSKE) shows a compositional bias: polar residues. The residue at position 196 (Thr196) is a Phosphothreonine. Phosphoserine occurs at positions 205 and 219. The span at 218-227 (NSDQTVTVKE) shows a compositional bias: polar residues.

In terms of tissue distribution, brain.

It localises to the cell membrane. The protein resides in the cell projection. It is found in the growth cone. The sequence is that of Brain acid soluble protein 1 (BASP1) from Homo sapiens (Human).